Reading from the N-terminus, the 183-residue chain is Large ribosomal subunit protein uL5 (183 aa).

The protein belongs to the universal ribosomal protein uL5 family. Part of the 50S ribosomal subunit; part of the 5S rRNA/L5/L18/L25 subcomplex. Contacts the 5S rRNA and the P site tRNA. Forms a bridge to the 30S subunit in the 70S ribosome.

In terms of biological role, this is one of the proteins that bind and probably mediate the attachment of the 5S RNA into the large ribosomal subunit, where it forms part of the central protuberance. In the 70S ribosome it contacts protein S13 of the 30S subunit (bridge B1b), connecting the 2 subunits; this bridge is implicated in subunit movement. Contacts the P site tRNA; the 5S rRNA and some of its associated proteins might help stabilize positioning of ribosome-bound tRNAs. The sequence is that of Large ribosomal subunit protein uL5 from Flavobacterium johnsoniae (strain ATCC 17061 / DSM 2064 / JCM 8514 / BCRC 14874 / CCUG 350202 / NBRC 14942 / NCIMB 11054 / UW101) (Cytophaga johnsonae).